Consider the following 265-residue polypeptide: UPF0246 protein NT01EI_0662 (265 aa).

It belongs to the UPF0246 family.

This chain is UPF0246 protein NT01EI_0662, found in Edwardsiella ictaluri (strain 93-146).